Here is a 363-residue protein sequence, read N- to C-terminus: 3-dehydroquinate synthase (363 aa).

Residues 134 to 135, Lys147, Lys156, and 174 to 177 each bind NAD(+); these read TT and TLIT. The Zn(2+) site is built by Glu189, His254, and His271.

It belongs to the sugar phosphate cyclases superfamily. Dehydroquinate synthase family. NAD(+) is required as a cofactor. Requires Co(2+) as cofactor. The cofactor is Zn(2+).

The protein localises to the cytoplasm. The catalysed reaction is 7-phospho-2-dehydro-3-deoxy-D-arabino-heptonate = 3-dehydroquinate + phosphate. Its pathway is metabolic intermediate biosynthesis; chorismate biosynthesis; chorismate from D-erythrose 4-phosphate and phosphoenolpyruvate: step 2/7. In terms of biological role, catalyzes the conversion of 3-deoxy-D-arabino-heptulosonate 7-phosphate (DAHP) to dehydroquinate (DHQ). The sequence is that of 3-dehydroquinate synthase from Prochlorococcus marinus subsp. pastoris (strain CCMP1986 / NIES-2087 / MED4).